We begin with the raw amino-acid sequence, 681 residues long: Serine/threonine-protein kinase PAK 6 (681 aa).

4 disordered regions span residues 1 to 30, 149 to 169, 200 to 256, and 268 to 355; these read MFRK…DPKE, GGTP…PRVL, QSSP…ESSL, and TAAT…PRTW. Residues 12–25 form the CRIB domain; it reads ISAPQNFQHRVHTS. Residues 26-406 form a linker region; the sequence is FDPKEGKFVG…VVDQGDPRLL (381 aa). Composition is skewed to low complexity over residues 201–212 and 268–278; these read SSPPGASPPTGT and TAATAPPSSSK. Polar residues predominate over residues 308-333; sequence SLPSDQPVGTFSPLTTSDTSSPQKSL. The 252-residue stretch at 407–658 folds into the Protein kinase domain; the sequence is LDSYVKIGEG…AQELLDHPFL (252 aa). Residues 413–421 and lysine 436 each bind ATP; that span reads IGEGSTGIV. Residue aspartate 526 is the Proton acceptor of the active site. At serine 560 the chain carries Phosphoserine; by autocatalysis.

This sequence belongs to the protein kinase superfamily. STE Ser/Thr protein kinase family. STE20 subfamily. As to quaternary structure, interacts tightly with GTP-bound but not GDP-bound CDC42/p21 and RAC1. Interacts with the androgen receptor AR and the estrogen receptor ESR1. Interacts with IQGAP1 and PPM1B. Post-translationally, autophosphorylated. Phosphorylated by MAP2K6//MAPKK6, leading to PAK6 activation. As to expression, selectively expressed in brain and testis, with lower levels in multiple tissues including prostate and breast.

It is found in the cytoplasm. The protein localises to the nucleus. It carries out the reaction L-seryl-[protein] + ATP = O-phospho-L-seryl-[protein] + ADP + H(+). It catalyses the reaction L-threonyl-[protein] + ATP = O-phospho-L-threonyl-[protein] + ADP + H(+). Its function is as follows. Serine/threonine protein kinase that plays a role in the regulation of gene transcription. The kinase activity is induced by various effectors including AR or MAP2K6/MAPKK6. Phosphorylates the DNA-binding domain of androgen receptor/AR and thereby inhibits AR-mediated transcription. Also inhibits ESR1-mediated transcription. May play a role in cytoskeleton regulation by interacting with IQGAP1. May protect cells from apoptosis through phosphorylation of BAD. This Homo sapiens (Human) protein is Serine/threonine-protein kinase PAK 6 (PAK6).